The chain runs to 357 residues: Serine protease 1 (357 aa).

The first 29 residues, 1–29 (MRRTTRARTGLSALLLAASLGLGAAPAGA), serve as a signal peptide directing secretion. Residues 30-170 (DAPQRPAPTP…TRVPGVFQRE (141 aa)) constitute a propeptide that is removed on maturation. A disulfide bridge links Cys-184 with Cys-204. Catalysis depends on charge relay system residues His-203, Asp-232, and Ser-313. Residues Cys-307 and Cys-333 are joined by a disulfide bond.

It belongs to the peptidase S1 family.

Its subcellular location is the secreted. Functionally, serine protease that preferentially cleaves peptide bonds on the C-terminal side of aspartate and glutamate with a 10-fold higher reactivity for a glutamyl bond than an aspartyl bond. The sequence is that of Serine protease 1 from Streptomyces fradiae (Streptomyces roseoflavus).